Consider the following 347-residue polypeptide: Protease HtpX homolog (347 aa).

3 consecutive transmembrane segments (helical) span residues 8-28, 46-66, and 76-96; these read IAFGLYLLGYIVMIIVAVVIA, ALTAVLIVLTTAFVIYLIAIV, and WGFILGMIFFVVLMNLITYIA. H174 serves as a coordination point for Zn(2+). The active site involves E175. H178 provides a ligand contact to Zn(2+). 2 helical membrane passes run 185 to 205 and 221 to 241; these read ALMLLFGVLPSILYYLGVSSV and LLAAVGILAVVVSFLVQLLVL. E248 provides a ligand contact to Zn(2+).

It belongs to the peptidase M48B family. It depends on Zn(2+) as a cofactor.

It is found in the cell membrane. The chain is Protease HtpX homolog from Pyrobaculum islandicum (strain DSM 4184 / JCM 9189 / GEO3).